Reading from the N-terminus, the 208-residue chain is Putative vomeronasal receptor-like protein 4 (208 aa).

The Extracellular segment spans residues 1 to 19 (MEMTKLFSYIVIKNVYYPQ). Residues 20-40 (VSFGISANTFLLLFHIFTFAY) traverse the membrane as a helical segment. Residues 41–48 (THRLKPID) lie on the Cytoplasmic side of the membrane. The helical transmembrane segment at 49-69 (MTISHLPLIHILLLFTQAILV) threads the bilayer. Topologically, residues 70 to 97 (SSDLFESWNIQNNDLKCKIITFLNRVMR) are extracellular. A disulfide bridge links Cys86 with Cys173. Residues 98–118 (GVSICTTCLLSVLQAITISPS) traverse the membrane as a helical segment. The Cytoplasmic segment spans residues 119–135 (TSFLEKFKHISANHTLG). Residues 136-156 (FILFSWVLNMFITNNLLLFIV) form a helical membrane-spanning segment. Residues 157-183 (PTPNRIGASLLFVTEHCYVLPMSYTHR) are Extracellular-facing. Residues 184-204 (SLFFILMVLRDVIFIGLMVLS) form a helical membrane-spanning segment. The Cytoplasmic segment spans residues 205 to 208 (SGYG).

This sequence belongs to the G-protein coupled receptor 1 family. Expressed in olfactory nerve.

It localises to the cell membrane. In terms of biological role, putative pheromone receptor. This chain is Putative vomeronasal receptor-like protein 4 (VN1R17P), found in Homo sapiens (Human).